A 520-amino-acid polypeptide reads, in one-letter code: Cobalt-zinc-cadmium resistance protein CzcB (520 aa).

Residues 9-29 (AAIAAIVLVGGVATGGVLLSG) form a helical membrane-spanning segment. The segment at 28 to 85 (SGRSAPEEQGGHSESKGHGDTEHHGKQAAEADHKDDKSHGDGEHHEVKKGPNGGALFS) is disordered. The span at 32–76 (APEEQGGHSESKGHGDTEHHGKQAAEADHKDDKSHGDGEHHEVKK) shows a compositional bias: basic and acidic residues. The stretch at 286-320 (EQKISAEQDYLSARNALQEAQISVQNAQQKLTAIG) forms a coiled coil.

It belongs to the membrane fusion protein (MFP) (TC 8.A.1) family.

Its subcellular location is the cell inner membrane. In terms of biological role, czcA and CzcB together would act in zinc efflux nearly as effectively as the complete czc efflux system (CzcABC). The CzcB protein is thought to funnel zinc cations to the CzcA transport protein. In Cupriavidus metallidurans (strain ATCC 43123 / DSM 2839 / NBRC 102507 / CH34) (Ralstonia metallidurans), this protein is Cobalt-zinc-cadmium resistance protein CzcB (czcB).